The sequence spans 170 residues: UPF0316 protein CLJ_B0679 (170 aa).

2 consecutive transmembrane segments (helical) span residues 1-21 (MLSY…LMTI) and 36-56 (IIGF…LSGI).

The protein belongs to the UPF0316 family.

The protein localises to the cell membrane. The sequence is that of UPF0316 protein CLJ_B0679 from Clostridium botulinum (strain 657 / Type Ba4).